A 226-amino-acid chain; its full sequence is Ras-related protein Rab-32 (226 aa).

A2 carries the N-acetylalanine modification. GTP contacts are provided by V38, G39, K40, T41, S42, S53, Q54, Y56, and T59. T41 is a binding site for Mg(2+). The Switch 1 motif lies at 50 to 64; the sequence is QLFSQHYRATIGVDF. T59 contributes to the Mg(2+) binding site. Position 73 is a phosphoserine (S73). Residue D83 participates in Mg(2+) binding. The GTP site is built by G86, N145, K146, D148, A177, and K178. The short motif at 86–99 is the Switch 2 element; it reads GQERFGNMTRVYYK. The tract at residues 180 to 199 is PKA-RII subunit binding domain; sequence NINIDEAARFLVENILANHQ. The interval 202–226 is disordered; the sequence is PSEENDGRIKLDEETMKKENKSHCC. The span at 206-226 shows a compositional bias: basic and acidic residues; sequence NDGRIKLDEETMKKENKSHCC. 2 S-geranylgeranyl cysteine lipidation sites follow: C225 and C226.

The protein belongs to the small GTPase superfamily. Rab family. In terms of assembly, interacts with ANKRD27. A decreased interaction with ANKRD27 seen in the presence of SGSM2. Interacts with LRRK2 (via N-terminus); this interaction results in stimulation of RAB10 phosphorylation by LRRK2. Requires Mg(2+) as cofactor.

It localises to the mitochondrion. The protein resides in the mitochondrion outer membrane. It is found in the cytoplasmic vesicle. The protein localises to the phagosome. Its subcellular location is the phagosome membrane. It localises to the melanosome. The protein resides in the melanosome membrane. The enzyme catalyses GTP + H2O = GDP + phosphate + H(+). Its activity is regulated as follows. Regulated by guanine the nucleotide exchange factor (GEF) BLOC-3 complex composed of HPS1 and HPS4 which promote the exchange of bound GDP for free GTP. Regulated by the GTPase activating protein (GAP) SGSM2/RUTBC1 which increases the GTP hydrolysis activity. Inhibited by GDP dissociation inhibitors (GDIs) which prevent Rab-GDP dissociation. In terms of biological role, the small GTPases Rab are key regulators of intracellular membrane trafficking, from the formation of transport vesicles to their fusion with membranes. Rabs cycle between an inactive GDP-bound form and an active GTP-bound form that is able to recruit to membranes different set of downstream effectors directly responsible for vesicle formation, movement, tethering and fusion. Also acts as an A-kinase anchoring protein by binding to the type II regulatory subunit of protein kinase A and anchoring it to the mitochondrion. Also involved in synchronization of mitochondrial fission. Plays a role in the maturation of phagosomes that engulf pathogens, such as S.aureus and M.tuberculosis. Plays an important role in the control of melanin production and melanosome biogenesis. In concert with RAB38, regulates the proper trafficking of melanogenic enzymes TYR, TYRP1 and DCT/TYRP2 to melanosomes in melanocytes. Stimulates phosphorylation of RAB10 'Thr-73' by LRRK2. This Sus scrofa (Pig) protein is Ras-related protein Rab-32 (RAB32).